Here is a 632-residue protein sequence, read N- to C-terminus: MAU2 chromatid cohesion factor homolog (632 aa).

2 TPR repeats span residues 453–486 and 493–526; these read GGFY…ANAE and SCSL…ASKI.

The protein belongs to the SCC4/mau-2 family. In terms of assembly, interacts with Nipped-B to form the cohesin loading complex.

The protein localises to the nucleus. Its subcellular location is the nucleoplasm. In terms of biological role, required for association of the cohesin complex with chromatin during interphase. Plays a role in sister chromatid cohesion and normal progression through prometaphase. This is MAU2 chromatid cohesion factor homolog from Drosophila sechellia (Fruit fly).